The sequence spans 407 residues: Argininosuccinate synthase (407 aa).

ATP is bound by residues 16–24 and A44; that span reads AYSGGLDTS. L-citrulline-binding residues include Y96 and S101. G126 lines the ATP pocket. Positions 128, 132, and 133 each coordinate L-aspartate. L-citrulline is bound at residue N132. 5 residues coordinate L-citrulline: R136, S185, S194, E270, and Y282.

It belongs to the argininosuccinate synthase family. Type 1 subfamily. As to quaternary structure, homotetramer.

The protein localises to the cytoplasm. It carries out the reaction L-citrulline + L-aspartate + ATP = 2-(N(omega)-L-arginino)succinate + AMP + diphosphate + H(+). It participates in amino-acid biosynthesis; L-arginine biosynthesis; L-arginine from L-ornithine and carbamoyl phosphate: step 2/3. In Shewanella oneidensis (strain ATCC 700550 / JCM 31522 / CIP 106686 / LMG 19005 / NCIMB 14063 / MR-1), this protein is Argininosuccinate synthase.